Reading from the N-terminus, the 287-residue chain is Cyclopropane mycolic acid synthase MmaA2 (287 aa).

S-adenosyl-L-methionine-binding positions include 33–34, 72–74, 94–99, 123–124, and Ile136; these read YS, GCG, TLSKNQ, and WE. Residue Cys269 is part of the active site.

It belongs to the CFA/CMAS family.

The catalysed reaction is a 1-acyl-2-(9Z)-enoyl-sn-glycero-3-phospholipid + S-adenosyl-L-methionine = a 1-acyl-2-(9-cyclopronane)-acyl-sn-glycero-3-phospholipid + S-adenosyl-L-homocysteine + H(+). The protein operates within lipid metabolism; mycolic acid biosynthesis. In terms of biological role, catalyzes the conversion of a double bond to a cis cyclopropane ring at the distal position of an alpha mycolic acid via the transfer of a methylene group from S-adenosyl-L-methionine. MmaA2 also catalyzes the biosynthesis of the cis-cyclopropanated methoxymycolates. Cyclopropanated mycolic acids are key factors participating in cell envelope permeability, host immunomodulation and persistence. This chain is Cyclopropane mycolic acid synthase MmaA2 (cmaC), found in Mycobacterium bovis (strain ATCC BAA-935 / AF2122/97).